A 116-amino-acid polypeptide reads, in one-letter code: Ribosome-binding factor A (116 aa).

This sequence belongs to the RbfA family. As to quaternary structure, monomer. Binds 30S ribosomal subunits, but not 50S ribosomal subunits or 70S ribosomes.

Its subcellular location is the cytoplasm. One of several proteins that assist in the late maturation steps of the functional core of the 30S ribosomal subunit. Associates with free 30S ribosomal subunits (but not with 30S subunits that are part of 70S ribosomes or polysomes). Required for efficient processing of 16S rRNA. May interact with the 5'-terminal helix region of 16S rRNA. This is Ribosome-binding factor A from Chlorobium phaeobacteroides (strain BS1).